The primary structure comprises 243 residues: Probable sentrin-specific protease 8 (243 aa).

Residues 12-185 are protease; it reads SAIYQSDINI…LYVLSIIEEL (174 aa). Catalysis depends on residues His109 and Asp126. The active-site Nucleophile is Cys174.

The protein belongs to the peptidase C48 family.

Its function is as follows. Protease that catalyzes two essential functions in the nedd8 pathway: processing of full-length nedd8 to its mature form and deconjugation of nedd8 from targeted proteins. The polypeptide is Probable sentrin-specific protease 8 (senp8) (Dictyostelium discoideum (Social amoeba)).